The chain runs to 122 residues: uncharacterized protein (122 aa).

The protein resides in the mitochondrion. This is an uncharacterized protein from Arabidopsis thaliana (Mouse-ear cress).